A 430-amino-acid chain; its full sequence is Adenylosuccinate synthetase (430 aa).

GTP-binding positions include 12-18 and 40-42; these read GDEGKGK and GHT. Catalysis depends on Asp-13, which acts as the Proton acceptor. Mg(2+)-binding residues include Asp-13 and Gly-40. IMP contacts are provided by residues 13–16, 38–41, Thr-128, Arg-142, Gln-223, Thr-238, and Arg-302; these read DEGK and NAGH. The Proton donor role is filled by His-41. 298–304 lines the substrate pocket; the sequence is TTTGRPR. GTP contacts are provided by residues Arg-304, 330–332, and 412–414; these read SID and SVG.

This sequence belongs to the adenylosuccinate synthetase family. Homodimer. Mg(2+) serves as cofactor.

It is found in the cytoplasm. It carries out the reaction IMP + L-aspartate + GTP = N(6)-(1,2-dicarboxyethyl)-AMP + GDP + phosphate + 2 H(+). It participates in purine metabolism; AMP biosynthesis via de novo pathway; AMP from IMP: step 1/2. Its function is as follows. Plays an important role in the de novo pathway of purine nucleotide biosynthesis. Catalyzes the first committed step in the biosynthesis of AMP from IMP. This is Adenylosuccinate synthetase from Streptococcus pyogenes serotype M1.